Here is a 221-residue protein sequence, read N- to C-terminus: Small ribosomal subunit protein uS2c (221 aa).

The protein belongs to the universal ribosomal protein uS2 family.

It localises to the plastid. The protein localises to the chloroplast. The protein is Small ribosomal subunit protein uS2c (rps2) of Cyanidioschyzon merolae (strain NIES-3377 / 10D) (Unicellular red alga).